The following is a 222-amino-acid chain: uncharacterized protein (222 aa).

This is an uncharacterized protein from Pyrococcus woesei.